Consider the following 394-residue polypeptide: Exodeoxyribonuclease 7 large subunit (394 aa).

This sequence belongs to the XseA family. As to quaternary structure, heterooligomer composed of large and small subunits.

Its subcellular location is the cytoplasm. It carries out the reaction Exonucleolytic cleavage in either 5'- to 3'- or 3'- to 5'-direction to yield nucleoside 5'-phosphates.. Its function is as follows. Bidirectionally degrades single-stranded DNA into large acid-insoluble oligonucleotides, which are then degraded further into small acid-soluble oligonucleotides. In Thermotoga sp. (strain RQ2), this protein is Exodeoxyribonuclease 7 large subunit.